Consider the following 183-residue polypeptide: Apo-citrate lyase phosphoribosyl-dephospho-CoA transferase (183 aa).

Belongs to the CitX family.

It catalyses the reaction apo-[citrate lyase ACP] + 2'-(5''-triphospho-alpha-D-ribosyl)-3'-dephospho-CoA = holo-[citrate lyase ACP] + diphosphate. Its function is as follows. Transfers 2-(5''-triphosphoribosyl)-3'-dephosphocoenzyme-A on a serine residue to the apo-acyl carrier protein (gamma chain) of the citrate lyase to yield holo-acyl carrier protein. This is Apo-citrate lyase phosphoribosyl-dephospho-CoA transferase from Escherichia coli O7:K1 (strain IAI39 / ExPEC).